The primary structure comprises 749 residues: Triacylglycerol lipase 5 (749 aa).

Residues 54–59 (HAISYD) carry the HXXXXD acyltransferase motif motif. Positions 183–388 (LVLSGGSTFG…DNDMPISRLS (206 aa)) constitute a PNPLA domain. Positions 214 to 218 (GSSAG) match the GXSXG motif. The active-site Nucleophile is the Ser-216. Residues Asn-270, Asn-289, Asn-297, Asn-304, and Asn-321 are each glycosylated (N-linked (GlcNAc...) asparagine). Residue Asp-375 is the Proton acceptor of the active site. N-linked (GlcNAc...) asparagine glycans are attached at residues Asn-474 and Asn-589. The disordered stretch occupies residues 585-643 (IKSPNKTAAPGRFPLQPLPSPSSTFNKRKMDMLSPSPSPSTSPQRSKSSFTQQGTRQKA). Residues 623–633 (PSTSPQRSKSS) are compositionally biased toward low complexity. A compositionally biased stretch (polar residues) spans 634 to 643 (FTQQGTRQKA). Position 645 is a phosphoserine (Ser-645). Asn-680, Asn-714, and Asn-742 each carry an N-linked (GlcNAc...) asparagine glycan.

Its subcellular location is the lipid droplet. The enzyme catalyses a triacylglycerol + H2O = a diacylglycerol + a fatty acid + H(+). It catalyses the reaction 1-(9Z-octadecenoyl)-sn-glycero-3-phosphate + (9Z)-octadecenoyl-CoA = 1,2-di-(9Z-octadecenoyl)-sn-glycero-3-phosphate + CoA. It carries out the reaction 1-(9Z-octadecenoyl)-sn-glycero-3-phosphate + hexadecanoyl-CoA = 1-hexadecanoyl-2-(9Z-octadecenoyl)-sn-glycero-3-phosphate + CoA. Its activity is regulated as follows. Loses its lipolytic activity in cells lacking nonpolar lipids, but retains its side activity as lysophospholipid acyltransferase. Lipid particle-localized triacylglycerol (TAG) lipase. The lipid droplet/particle is a lipid storage compartment which serves as a depot of energy and building blocks for membrane lipid biosynthesis. Involved in the mobilization of the non-polar storage lipids triacylglycerols (TAGs) from lipid particles by hydrolysis of TAGs, releasing and supplying specific fatty acids to the appropriate metabolic pathways. Also catalyzes the acylation of lysophosphatidic acid (LPA). The sequence is that of Triacylglycerol lipase 5 (TGL5) from Saccharomyces cerevisiae (strain ATCC 204508 / S288c) (Baker's yeast).